The primary structure comprises 314 residues: S-methyl-5'-thioadenosine phosphorylase (314 aa).

Residues Ser-31, Arg-73 to His-74, and Ser-106 to Ala-107 contribute to the phosphate site. Met-207 is a substrate binding site. A phosphate-binding site is contributed by Thr-208. Asp-231–Asp-233 contributes to the substrate binding site.

It belongs to the PNP/MTAP phosphorylase family. MTAP subfamily. As to quaternary structure, homohexamer. Dimer of a homotrimer.

It carries out the reaction S-methyl-5'-thioadenosine + phosphate = 5-(methylsulfanyl)-alpha-D-ribose 1-phosphate + adenine. Its pathway is amino-acid biosynthesis; L-methionine biosynthesis via salvage pathway; S-methyl-5-thio-alpha-D-ribose 1-phosphate from S-methyl-5'-thioadenosine (phosphorylase route): step 1/1. In terms of biological role, catalyzes the reversible phosphorylation of S-methyl-5'-thioadenosine (MTA) to adenine and 5-methylthioribose-1-phosphate. Involved in the breakdown of MTA, a major by-product of polyamine biosynthesis. Responsible for the first step in the methionine salvage pathway after MTA has been generated from S-adenosylmethionine. Has broad substrate specificity with 6-aminopurine nucleosides as preferred substrates. The chain is S-methyl-5'-thioadenosine phosphorylase from Prochlorococcus marinus (strain SARG / CCMP1375 / SS120).